A 523-amino-acid polypeptide reads, in one-letter code: Butyrophilin subfamily 2 member A2 (523 aa).

The signal sequence occupies residues 1–32 (MEPAAALHFSLPASLLLLLLLLLLSLCALVSA). Residues 33–265 (QFTVVGPANP…AVILTASPWM (233 aa)) lie on the Extracellular side of the membrane. An Ig-like V-type domain is found at 34–145 (FTVVGPANPI…SYDEAILRLV (112 aa)). 4 N-linked (GlcNAc...) asparagine glycosylation sites follow: Asn50, Asn118, Asn220, and Asn226. Cys55 and Cys129 are disulfide-bonded. An Ig-like C2-type domain is found at 153–234 (PLIEIKAQED…VNNTLLGQEK (82 aa)). The helical transmembrane segment at 266–286 (VSMTVILAVFIIFMAVSICCI) threads the bilayer. Residues 286–321 (IKKLQREKKILSGEKKVEQEEKEIAQQLQEELRWRR) adopt a coiled-coil conformation. The Cytoplasmic portion of the chain corresponds to 287–523 (KKLQREKKIL…LHRVGTHQSL (237 aa)). The B30.2/SPRY domain occupies 309 to 502 (IAQQLQEELR…IFICPALTGA (194 aa)).

It belongs to the immunoglobulin superfamily. BTN/MOG family. Post-translationally, N-glycosylated. As to expression, highly expressed in brain, bone marrow, small intestine, muscle, spleen and pancreas. Moderate expression was seen in lung, liver and kidney.

It localises to the membrane. Inhibits the proliferation of CD4 and CD8 T-cells activated by anti-CD3 antibodies, T-cell metabolism and IL2 and IFNG secretion. This is Butyrophilin subfamily 2 member A2 (BTN2A2) from Homo sapiens (Human).